A 140-amino-acid chain; its full sequence is Small ribosomal subunit protein uS12 (140 aa).

3-methylthioaspartic acid is present on Asp102.

It belongs to the universal ribosomal protein uS12 family. Part of the 30S ribosomal subunit. Contacts proteins S8 and S17. May interact with IF1 in the 30S initiation complex.

With S4 and S5 plays an important role in translational accuracy. Functionally, interacts with and stabilizes bases of the 16S rRNA that are involved in tRNA selection in the A site and with the mRNA backbone. Located at the interface of the 30S and 50S subunits, it traverses the body of the 30S subunit contacting proteins on the other side and probably holding the rRNA structure together. The combined cluster of proteins S8, S12 and S17 appears to hold together the shoulder and platform of the 30S subunit. The protein is Small ribosomal subunit protein uS12 of Bacillus cytotoxicus (strain DSM 22905 / CIP 110041 / 391-98 / NVH 391-98).